Reading from the N-terminus, the 313-residue chain is Biotin synthase (313 aa).

In terms of domain architecture, Radical SAM core spans N28 to S258. [4Fe-4S] cluster contacts are provided by C46, C50, and C53. The [2Fe-2S] cluster site is built by C90, C121, C181, and R256.

This sequence belongs to the radical SAM superfamily. Biotin synthase family. In terms of assembly, homodimer. [4Fe-4S] cluster serves as cofactor. The cofactor is [2Fe-2S] cluster.

The catalysed reaction is (4R,5S)-dethiobiotin + (sulfur carrier)-SH + 2 reduced [2Fe-2S]-[ferredoxin] + 2 S-adenosyl-L-methionine = (sulfur carrier)-H + biotin + 2 5'-deoxyadenosine + 2 L-methionine + 2 oxidized [2Fe-2S]-[ferredoxin]. The protein operates within cofactor biosynthesis; biotin biosynthesis; biotin from 7,8-diaminononanoate: step 2/2. In terms of biological role, catalyzes the conversion of dethiobiotin (DTB) to biotin by the insertion of a sulfur atom into dethiobiotin via a radical-based mechanism. In Francisella tularensis subsp. tularensis (strain FSC 198), this protein is Biotin synthase.